A 298-amino-acid chain; its full sequence is Ketohexokinase (298 aa).

Beta-D-fructose-binding residues include Asp-15, Gly-41, Asn-42, and Asn-45. ATP is bound by residues Arg-108, 226–229 (AEEG), and 255–258 (GAGD). Residue Asp-258 participates in beta-D-fructose binding.

Belongs to the carbohydrate kinase PfkB family. Homodimer. As to expression, most abundant in liver, kidney, gut, spleen and pancreas. Low levels also found in adrenal, muscle, brain and eye.

It carries out the reaction beta-D-fructose + ATP = beta-D-fructose 1-phosphate + ADP + H(+). It functions in the pathway carbohydrate metabolism; fructose metabolism. With respect to regulation, requires potassium. Inhibition by ADP. In terms of biological role, catalyzes the phosphorylation of the ketose sugar fructose to fructose-1-phosphate. This is Ketohexokinase from Homo sapiens (Human).